Consider the following 311-residue polypeptide: HPr kinase/phosphorylase (311 aa).

Residues His-138 and Lys-159 contribute to the active site. 153–160 (GDSGIGKS) contacts ATP. A Mg(2+)-binding site is contributed by Ser-160. The active-site Proton acceptor; for phosphorylation activity. Proton donor; for dephosphorylation activity is Asp-177. The segment at 201–210 (IEIRGVGIID) is important for the catalytic mechanism of both phosphorylation and dephosphorylation. Residue Glu-202 participates in Mg(2+) binding. Arg-243 is a catalytic residue. Residues 264 to 269 (PVKTGR) form an important for the catalytic mechanism of dephosphorylation region.

It belongs to the HPrK/P family. As to quaternary structure, homohexamer. Requires Mg(2+) as cofactor.

The catalysed reaction is [HPr protein]-L-serine + ATP = [HPr protein]-O-phospho-L-serine + ADP + H(+). It carries out the reaction [HPr protein]-O-phospho-L-serine + phosphate + H(+) = [HPr protein]-L-serine + diphosphate. Its function is as follows. Catalyzes the ATP- as well as the pyrophosphate-dependent phosphorylation of a specific serine residue in HPr, a phosphocarrier protein of the phosphoenolpyruvate-dependent sugar phosphotransferase system (PTS). HprK/P also catalyzes the pyrophosphate-producing, inorganic phosphate-dependent dephosphorylation (phosphorolysis) of seryl-phosphorylated HPr (P-Ser-HPr). The two antagonistic activities of HprK/P are regulated by several intracellular metabolites, which change their concentration in response to the absence or presence of rapidly metabolisable carbon sources (glucose, fructose, etc.) in the growth medium. Therefore, by controlling the phosphorylation state of HPr, HPrK/P is a sensor enzyme that plays a major role in the regulation of carbon metabolism and sugar transport: it mediates carbon catabolite repression (CCR), and regulates PTS-catalyzed carbohydrate uptake and inducer exclusion. The polypeptide is HPr kinase/phosphorylase (Streptococcus pneumoniae (strain 70585)).